A 405-amino-acid chain; its full sequence is Imidazolonepropionase (405 aa).

Residues His-73 and His-75 each contribute to the Fe(3+) site. His-73 and His-75 together coordinate Zn(2+). Arg-82, Tyr-145, and His-178 together coordinate 4-imidazolone-5-propanoate. Tyr-145 serves as a coordination point for N-formimidoyl-L-glutamate. Residue His-243 participates in Fe(3+) binding. A Zn(2+)-binding site is contributed by His-243. Gln-246 is a binding site for 4-imidazolone-5-propanoate. Fe(3+) is bound at residue Asp-318. Residue Asp-318 coordinates Zn(2+). Residues Asn-320 and Gly-322 each contribute to the N-formimidoyl-L-glutamate site. Thr-323 provides a ligand contact to 4-imidazolone-5-propanoate.

The protein belongs to the metallo-dependent hydrolases superfamily. HutI family. Zn(2+) serves as cofactor. It depends on Fe(3+) as a cofactor.

The protein resides in the cytoplasm. The catalysed reaction is 4-imidazolone-5-propanoate + H2O = N-formimidoyl-L-glutamate. It participates in amino-acid degradation; L-histidine degradation into L-glutamate; N-formimidoyl-L-glutamate from L-histidine: step 3/3. Functionally, catalyzes the hydrolytic cleavage of the carbon-nitrogen bond in imidazolone-5-propanoate to yield N-formimidoyl-L-glutamate. It is the third step in the universal histidine degradation pathway. The protein is Imidazolonepropionase of Brucella suis biovar 1 (strain 1330).